Consider the following 228-residue polypeptide: Response regulator MprA (228 aa).

The Response regulatory domain maps to 2–116 (RILVVDDDRA…ELLARMRALL (115 aa)). At aspartate 46 the chain carries 4-aspartylphosphate. Residues 127–225 (SVAMTFSDLT…VRGVGYVLRE (99 aa)) constitute a DNA-binding region (ompR/PhoB-type).

Post-translationally, phosphorylated and dephosphorylated by MprB.

Its subcellular location is the cytoplasm. In terms of biological role, member of the two-component regulatory system MprB/MprA which contributes to maintaining a balance among several systems involved in stress resistance and is required for establishment and maintenance of persistent infection in the host. Functions as a transcriptional regulator that recognizes a 19-bp nucleotide motif comprizing two loosely conserved 8-bp direct DNA-binding motif repeats separated by a 3-bp spacer region. The protein is Response regulator MprA (mprA) of Mycobacterium avium (strain 104).